The chain runs to 213 residues: GTP cyclohydrolase 1 (213 aa).

Cys104, His107, and Cys175 together coordinate Zn(2+).

The protein belongs to the GTP cyclohydrolase I family. In terms of assembly, toroid-shaped homodecamer, composed of two pentamers of five dimers.

The enzyme catalyses GTP + H2O = 7,8-dihydroneopterin 3'-triphosphate + formate + H(+). It participates in cofactor biosynthesis; 7,8-dihydroneopterin triphosphate biosynthesis; 7,8-dihydroneopterin triphosphate from GTP: step 1/1. In Brucella anthropi (strain ATCC 49188 / DSM 6882 / CCUG 24695 / JCM 21032 / LMG 3331 / NBRC 15819 / NCTC 12168 / Alc 37) (Ochrobactrum anthropi), this protein is GTP cyclohydrolase 1.